We begin with the raw amino-acid sequence, 455 residues long: MDTNNNIEKEILALAKQKVSPIEYENCLSQLKYNPNASKSDIAFFYAPNTLLCNWITAKYGTLLKEILSQNKVGMHLAHSVDVRIEVAPKIQISTQSNINYKATKMSVKDSYTFENFVVGSCNNTVYEIAKKVAQSDTPPYNPVLFYGGTGLGKTHILNAIGNHALEKHKKVVLVTSEDFLTDFLKHLDNKTMDSFKAKYRHCDFFLLDDAQFLQGKPKLEEEFFHTFNELHANSKQIVLISDRSPKNIAGLEDRLKSRFEWGITAKVMPPDLETKLSIVKQKCQLNQIILPEEVMEYIAQHISDNIRQMEGAIIKISVNANLMNASIDLNLAKTVLEDLQKDHAEGSSLENILLAVAQSLNLKSSEIKVSSRQKNVALARKLVVYFARLYTPNPTLSLAQFLDLKDHSSISKMYSSVKKMLEEEKSPFILSLREEIKNRLNELNDKKTAFNSSE.

The domain I, interacts with DnaA modulators stretch occupies residues 1-75 (MDTNNNIEKE…EILSQNKVGM (75 aa)). Positions 75–106 (MHLAHSVDVRIEVAPKIQISTQSNINYKATKM) are domain II. Positions 107-321 (SVKDSYTFEN…GAIIKISVNA (215 aa)) are domain III, AAA+ region. Residues glycine 151, glycine 153, lysine 154, and threonine 155 each coordinate ATP. Positions 322–455 (NLMNASIDLN…DKKTAFNSSE (134 aa)) are domain IV, binds dsDNA.

Belongs to the DnaA family. Oligomerizes as a right-handed, spiral filament on DNA at oriC.

The protein localises to the cytoplasm. Functionally, plays an essential role in the initiation and regulation of chromosomal replication. ATP-DnaA binds to the origin of replication (oriC) to initiate formation of the DNA replication initiation complex once per cell cycle. Binds the DnaA box (a 9 base pair repeat at the origin) and separates the double-stranded (ds)DNA. Forms a right-handed helical filament on oriC DNA; dsDNA binds to the exterior of the filament while single-stranded (ss)DNA is stabiized in the filament's interior. The ATP-DnaA-oriC complex binds and stabilizes one strand of the AT-rich DNA unwinding element (DUE), permitting loading of DNA polymerase. After initiation quickly degrades to an ADP-DnaA complex that is not apt for DNA replication. Binds acidic phospholipids. In Helicobacter pylori (strain HPAG1), this protein is Chromosomal replication initiator protein DnaA.